The following is a 466-amino-acid chain: MTGSKDYVVADISLAGWGRKELDIAETEMPGLMACREEFGAKKPLKGARITGSLHMTIQTAVLIETLKALGADIRWASCNIFSTQDHAAAAIAEAGIPVFAVKGESLEQYWDYTDRIFQWADGGLSNMILDDGGDATMYILIGARAEAGEDVLSNPQSEEEEYFYAQVKKRLKASPGFFTKQKAAIRGVTEETTTGVNRLYQLQKKGLLPFPAINVNDSVTKSKFDNKYGCKESLVDGIRRGTDTMMAGKVAVVCGYGDVGKGSSASLKGAGARVKVTEVDPICALQAAMDGFEVVTLEDAAPTADIVITTTGNKDVVTLDHMRSMKDMVIVGNIGHFDNEIQVASLRNLKWTNVKPQVDMITFPDGKRMILLSEGRLLNLGNATGHPSFVMSASFTNQVLAQIELFTKGEQYQNQVYVLPKHLDEKVARLHLDKLGARLTELSGEQAAYIGVTPQGPFKPEHYRY.

Substrate-binding residues include threonine 57, aspartate 132, and glutamate 192. Position 193 to 195 (193 to 195 (TTT)) interacts with NAD(+). Substrate is bound by residues lysine 222 and aspartate 226. NAD(+)-binding positions include asparagine 227, 256–261 (GYGDVG), glutamate 279, asparagine 314, 335–337 (IGH), and asparagine 380.

This sequence belongs to the adenosylhomocysteinase family. NAD(+) serves as cofactor.

Its subcellular location is the cytoplasm. The enzyme catalyses S-adenosyl-L-homocysteine + H2O = L-homocysteine + adenosine. Its pathway is amino-acid biosynthesis; L-homocysteine biosynthesis; L-homocysteine from S-adenosyl-L-homocysteine: step 1/1. In terms of biological role, may play a key role in the regulation of the intracellular concentration of adenosylhomocysteine. This chain is Adenosylhomocysteinase, found in Mesorhizobium japonicum (strain LMG 29417 / CECT 9101 / MAFF 303099) (Mesorhizobium loti (strain MAFF 303099)).